We begin with the raw amino-acid sequence, 158 residues long: Endoribonuclease YbeY (158 aa).

Residues histidine 124, histidine 128, and histidine 134 each contribute to the Zn(2+) site.

This sequence belongs to the endoribonuclease YbeY family. Requires Zn(2+) as cofactor.

The protein resides in the cytoplasm. In terms of biological role, single strand-specific metallo-endoribonuclease involved in late-stage 70S ribosome quality control and in maturation of the 3' terminus of the 16S rRNA. This Latilactobacillus sakei subsp. sakei (strain 23K) (Lactobacillus sakei subsp. sakei) protein is Endoribonuclease YbeY.